A 239-amino-acid chain; its full sequence is tRNA (guanine-N(7)-)-methyltransferase (239 aa).

S-adenosyl-L-methionine contacts are provided by Glu69, Glu94, Asp121, and Asp144. Asp144 is an active-site residue. Residues Lys148, Asp180, and 217–220 contribute to the substrate site; that span reads TKFE.

Belongs to the class I-like SAM-binding methyltransferase superfamily. TrmB family.

It catalyses the reaction guanosine(46) in tRNA + S-adenosyl-L-methionine = N(7)-methylguanosine(46) in tRNA + S-adenosyl-L-homocysteine. Its pathway is tRNA modification; N(7)-methylguanine-tRNA biosynthesis. Catalyzes the formation of N(7)-methylguanine at position 46 (m7G46) in tRNA. This chain is tRNA (guanine-N(7)-)-methyltransferase, found in Pseudoalteromonas atlantica (strain T6c / ATCC BAA-1087).